Consider the following 89-residue polypeptide: Small ribosomal subunit protein uS15 (89 aa).

This sequence belongs to the universal ribosomal protein uS15 family. As to quaternary structure, part of the 30S ribosomal subunit. Forms a bridge to the 50S subunit in the 70S ribosome, contacting the 23S rRNA.

In terms of biological role, one of the primary rRNA binding proteins, it binds directly to 16S rRNA where it helps nucleate assembly of the platform of the 30S subunit by binding and bridging several RNA helices of the 16S rRNA. Its function is as follows. Forms an intersubunit bridge (bridge B4) with the 23S rRNA of the 50S subunit in the ribosome. In Haemophilus influenzae (strain 86-028NP), this protein is Small ribosomal subunit protein uS15.